A 193-amino-acid chain; its full sequence is Acyl carrier protein phosphodiesterase (193 aa).

The protein belongs to the AcpH family.

The catalysed reaction is holo-[ACP] + H2O = apo-[ACP] + (R)-4'-phosphopantetheine + H(+). Converts holo-ACP to apo-ACP by hydrolytic cleavage of the phosphopantetheine prosthetic group from ACP. In Klebsiella pneumoniae (strain 342), this protein is Acyl carrier protein phosphodiesterase.